The chain runs to 448 residues: Methylenetetrahydrofolate--tRNA-(uracil-5-)-methyltransferase TrmFO (448 aa).

Residue 13–18 (GAGLAG) coordinates FAD.

It belongs to the MnmG family. TrmFO subfamily. The cofactor is FAD.

It is found in the cytoplasm. The enzyme catalyses uridine(54) in tRNA + (6R)-5,10-methylene-5,6,7,8-tetrahydrofolate + NADH + H(+) = 5-methyluridine(54) in tRNA + (6S)-5,6,7,8-tetrahydrofolate + NAD(+). It carries out the reaction uridine(54) in tRNA + (6R)-5,10-methylene-5,6,7,8-tetrahydrofolate + NADPH + H(+) = 5-methyluridine(54) in tRNA + (6S)-5,6,7,8-tetrahydrofolate + NADP(+). In terms of biological role, catalyzes the folate-dependent formation of 5-methyl-uridine at position 54 (M-5-U54) in all tRNAs. In Streptococcus pyogenes serotype M12 (strain MGAS2096), this protein is Methylenetetrahydrofolate--tRNA-(uracil-5-)-methyltransferase TrmFO.